Here is a 203-residue protein sequence, read N- to C-terminus: UPF0637 protein SERP0693 (203 aa).

It belongs to the UPF0637 family.

The polypeptide is UPF0637 protein SERP0693 (Staphylococcus epidermidis (strain ATCC 35984 / DSM 28319 / BCRC 17069 / CCUG 31568 / BM 3577 / RP62A)).